Here is a 741-residue protein sequence, read N- to C-terminus: Nuclear poly(A) polymerase 4 (741 aa).

Residues 101 to 103 (FGS), 113 to 116 (ADID), 114 to 116 (DID), D169, K230, Y239, and 248 to 249 (GV) contribute to the ATP site. Mg(2+) contacts are provided by D114, D116, and D169. Residues 485–492 (RRRQLPPF) carry the Nuclear localization signal motif. 2 disordered regions span residues 494–556 (FPNG…LSPQ) and 683–741 (YEGF…RLLT). Positions 534–551 (KNDSEMMDVRPEKPEKRA) are enriched in basic and acidic residues. Polar residues predominate over residues 701 to 717 (LYSQSGMSEDLQSNSLV). A compositionally biased stretch (basic and acidic residues) spans 721-731 (EKSEDRARSES). Positions 732–741 (FQKSQIRLLT) are enriched in polar residues.

It belongs to the poly(A) polymerase family. As to quaternary structure, monomer. Forms a complex with cleavage and polyadenylation specificity factor (CPSF) subunits CFIS2, FIPS3, PAPS1, PABN1, PABN2, PABN3 and FIPS5. Mg(2+) is required as a cofactor. The cofactor is Mn(2+). Mostly expressed in flowers (very active in pollen, sepals, styles, and stigmas), cotyledons and hypocotyls, and, to a lower extent, in roots (confined to the vascular tissue in the radicle) and leaves (in the vascular tissue and leaf petioles). Barely detected in stems. Active in the primary and secondary root systems.

It localises to the nucleus. It carries out the reaction RNA(n) + ATP = RNA(n)-3'-adenine ribonucleotide + diphosphate. Functionally, essential protein. Polymerase that creates the 3'-poly(A) tail of mRNA's. Also required for the endoribonucleolytic cleavage reaction at some polyadenylation sites. May acquire specificity through interaction with a cleavage and polyadenylation specificity factor (CPSF) at its C-terminus. This is Nuclear poly(A) polymerase 4 from Arabidopsis thaliana (Mouse-ear cress).